Consider the following 278-residue polypeptide: Large ribosomal subunit protein uL2 (278 aa).

Disordered regions lie at residues 1–58 (MAIR…GGGH) and 225–278 (VMNP…KNKR). Over residues 37–58 (LHGRGGRNAHGRITTRHKGGGH) the composition is skewed to basic residues. Positions 253–267 (PEGRTRKNKASDKMI) are enriched in basic and acidic residues. The segment covering 268-278 (VRRRRTGKNKR) has biased composition (basic residues).

This sequence belongs to the universal ribosomal protein uL2 family. In terms of assembly, part of the 50S ribosomal subunit. Forms a bridge to the 30S subunit in the 70S ribosome.

Its function is as follows. One of the primary rRNA binding proteins. Required for association of the 30S and 50S subunits to form the 70S ribosome, for tRNA binding and peptide bond formation. It has been suggested to have peptidyltransferase activity; this is somewhat controversial. Makes several contacts with the 16S rRNA in the 70S ribosome. In Rhodococcus erythropolis (strain PR4 / NBRC 100887), this protein is Large ribosomal subunit protein uL2.